The sequence spans 132 residues: NLP effector protein 15 (132 aa).

The Conserved undecapeptide motif I motif lies at Met1–Asp9. The Hepta-peptide GHRHDWE motif II motif lies at Gly16–Glu22.

It belongs to the Necrosis inducing protein (NPP1) family.

Its subcellular location is the secreted. Functionally, secreted effector that contributes moderately to virulence during infection by P.capsici. Causes only small yellow areas at 3 days after inoculation of host C.annuum leaves; these areas expand somewhat and became necrotic at 7 days after inoculation. Leads only to chlorotic areas, without necrosis at 7 days after non-host N.benthamiana leaves infection. This chain is NLP effector protein 15, found in Phytophthora capsici.